A 490-amino-acid polypeptide reads, in one-letter code: Type I restriction enzyme EcoEI methylase subunit (490 aa).

S-adenosyl-L-methionine is bound by residues 163–168, 193–195, and glutamate 226; these read EFYTPR and TGG.

It belongs to the N(4)/N(6)-methyltransferase family. The type I restriction/modification system is composed of three polypeptides R, M and S; the restriction enzyme has stoichiometry R(2)M(2)S(1) while the methyltransferase is M(2)S(1).

The catalysed reaction is a 2'-deoxyadenosine in DNA + S-adenosyl-L-methionine = an N(6)-methyl-2'-deoxyadenosine in DNA + S-adenosyl-L-homocysteine + H(+). Its function is as follows. The subtype gamma methyltransferase (M) subunit of a type I restriction enzyme. The M and S subunits together form a methyltransferase (MTase) that methylates two adenine residues of the sequence 5'-GAGN(7)ATGC-3'. In the presence of the R subunit the complex can also act as an endonuclease, binding to the same target sequence but cutting the DNA some distance from this site. Whether the DNA is cut or modified depends on the methylation state of the target sequence. When the target site is unmodified, the DNA is cut. When the target site is hemimethylated, the complex acts as a maintenance MTase modifying the DNA so that both strands become methylated. After locating a non-methylated recognition site, the enzyme complex serves as a molecular motor that translocates DNA in an ATP-dependent manner until a collision occurs that triggers cleavage. This chain is Type I restriction enzyme EcoEI methylase subunit (hsdM), found in Escherichia coli.